The chain runs to 555 residues: Synaptotagmin-14 (555 aa).

At 1 to 24 (MAIEGGERTCGVHELICIRKVSPE) the chain is on the extracellular side. A helical; Signal-anchor for type III membrane protein transmembrane segment spans residues 25 to 47 (AVGFLSAVGVFIILMLLLFLYIN). Residues 48–555 (KKFCFENVGG…VCRWHALLES (508 aa)) are Cytoplasmic-facing. 2 disordered regions span residues 157–179 (TPPL…HLSC) and 222–257 (GYEE…DPEP). C2 domains are found at residues 260–379 (KYGT…SLPV) and 415–550 (SVPE…CRWH).

It belongs to the synaptotagmin family. Homodimer. Can also form heterodimers. Highly expressed in fetal and adult brain tissue.

It is found in the membrane. May be involved in the trafficking and exocytosis of secretory vesicles in non-neuronal tissues. Is Ca(2+)-independent. The protein is Synaptotagmin-14 (SYT14) of Homo sapiens (Human).